A 173-amino-acid chain; its full sequence is Glucagon family neuropeptides (173 aa).

A signal peptide spans 1-22 (MSSKATLALLIYGIIMHYSVYS). The propeptide occupies 23-80 (SPLGLNYPNLRLENEVYDEDGNSLPALAFDSDQIAIRSPPSVADDLYTLYYPPEKGTE). The residue at position 166 (K166) is a Lysine amide. A propeptide spanning residues 170 to 173 (LGYL) is cleaved from the precursor.

This sequence belongs to the glucagon family.

The protein localises to the secreted. Primary role of GHRH is to release GH from the pituitary. Functionally, PACAP plays pivotal roles as a neurotransmitter and/or a neuromodulator. The sequence is that of Glucagon family neuropeptides from Oncorhynchus nerka (Sockeye salmon).